Here is a 235-residue protein sequence, read N- to C-terminus: tRNA (guanine-N(7)-)-methyltransferase (235 aa).

S-adenosyl-L-methionine contacts are provided by residues Gly-60, 83-84, 116-117, and Leu-136; these read EI and NA. Asp-139 is a catalytic residue. 214-216 serves as a coordination point for S-adenosyl-L-methionine; the sequence is SEE.

This sequence belongs to the class I-like SAM-binding methyltransferase superfamily. TrmB family.

It localises to the nucleus. The enzyme catalyses guanosine(46) in tRNA + S-adenosyl-L-methionine = N(7)-methylguanosine(46) in tRNA + S-adenosyl-L-homocysteine. Its pathway is tRNA modification; N(7)-methylguanine-tRNA biosynthesis. Catalyzes the formation of N(7)-methylguanine at position 46 (m7G46) in tRNA. This chain is tRNA (guanine-N(7)-)-methyltransferase, found in Anopheles gambiae (African malaria mosquito).